The chain runs to 505 residues: Ribose import ATP-binding protein RbsA 1 (505 aa).

2 consecutive ABC transporter domains span residues 13 to 249 (LALR…VGRD) and 254 to 503 (YPKQ…TGRA). 45–52 (GENGAGKS) is an ATP binding site.

This sequence belongs to the ABC transporter superfamily. Ribose importer (TC 3.A.1.2.1) family. As to quaternary structure, the complex is composed of an ATP-binding protein (RbsA), two transmembrane proteins (RbsC) and a solute-binding protein (RbsB).

The protein resides in the cell membrane. It catalyses the reaction D-ribose(out) + ATP + H2O = D-ribose(in) + ADP + phosphate + H(+). Its function is as follows. Part of the ABC transporter complex RbsABC involved in ribose import. Responsible for energy coupling to the transport system. In Streptomyces coelicolor (strain ATCC BAA-471 / A3(2) / M145), this protein is Ribose import ATP-binding protein RbsA 1.